The chain runs to 180 residues: ATP-dependent protease subunit HslV (180 aa).

T8 is a catalytic residue. Positions 165, 168, and 171 each coordinate Na(+).

It belongs to the peptidase T1B family. HslV subfamily. As to quaternary structure, a double ring-shaped homohexamer of HslV is capped on each side by a ring-shaped HslU homohexamer. The assembly of the HslU/HslV complex is dependent on binding of ATP.

It is found in the cytoplasm. It catalyses the reaction ATP-dependent cleavage of peptide bonds with broad specificity.. Allosterically activated by HslU binding. Protease subunit of a proteasome-like degradation complex believed to be a general protein degrading machinery. In Halalkalibacterium halodurans (strain ATCC BAA-125 / DSM 18197 / FERM 7344 / JCM 9153 / C-125) (Bacillus halodurans), this protein is ATP-dependent protease subunit HslV.